The primary structure comprises 332 residues: 3'(2'),5'-bisphosphate nucleotidase (332 aa).

D49 serves as the catalytic Proton acceptor. Positions 73, 129, 131, and 132 each coordinate Mg(2+). The active-site Proton acceptor is the T134. Adenosine 3',5'-bisphosphate contacts are provided by T134, S245, K248, R262, and D274. The AMP site is built by S245, K248, R262, and D274. Mg(2+) is bound at residue D274.

This sequence belongs to the inositol monophosphatase superfamily. Requires Mg(2+) as cofactor.

It carries out the reaction 3'-phosphoadenylyl sulfate + H2O = adenosine 5'-phosphosulfate + phosphate. The catalysed reaction is adenosine 3',5'-bisphosphate + H2O = AMP + phosphate. The enzyme catalyses adenosine 2',5'-bisphosphate + H2O = AMP + phosphate. It catalyses the reaction 1D-myo-inositol 1,4-bisphosphate + H2O = 1D-myo-inositol 4-phosphate + phosphate. It carries out the reaction 1D-myo-inositol 1,3,4-trisphosphate + H2O = 1D-myo-inositol 3,4-bisphosphate + phosphate. In terms of biological role, phosphatase that converts adenosine 3'-phosphate 5'-phosphosulfate (PAPS) to adenosine 5'-phosphosulfate (APS) and 3'(2')-phosphoadenosine 5'-phosphate (PAP) to AMP. Is also able to hydrolyze inositol 1,4-bisphosphate and inositol 1,3,4-trisphosphate. The polypeptide is 3'(2'),5'-bisphosphate nucleotidase (Dictyostelium discoideum (Social amoeba)).